A 218-amino-acid chain; its full sequence is Transmembrane gamma-carboxyglutamic acid protein 1 (218 aa).

Positions 1–20 (MGRVFLTGEKANSVLKRYPR) are excised as a propeptide. One can recognise a Gla domain in the interval 20–66 (RANGFFEEIRQGNIERECKEEFCTFEEAREAFENNEKTKEFWSTYTK). Residues 21–80 (ANGFFEEIRQGNIERECKEEFCTFEEAREAFENNEKTKEFWSTYTKAQQGESNRGSDWFQ) lie on the Extracellular side of the membrane. Cysteines 37 and 42 form a disulfide. Residues 81–101 (FYLTFPLIFGLFIILLVIFLI) traverse the membrane as a helical segment. Residues 102–218 (WRCFLRNKTR…PMVPVVTTIK (117 aa)) are Cytoplasmic-facing. The interval 161 to 195 (TRLSNCDPPPTYEEATGQVNLQRSETEPHLDPPPE) is disordered.

In terms of processing, gla residues are produced after subsequent post-translational modifications of glutamate by a vitamin K-dependent gamma-carboxylase.

It is found in the membrane. This chain is Transmembrane gamma-carboxyglutamic acid protein 1 (PRRG1), found in Pongo abelii (Sumatran orangutan).